Here is a 315-residue protein sequence, read N- to C-terminus: Malate dehydrogenase (315 aa).

NAD(+) contacts are provided by residues 10-15 (GAGNVG) and D34. Residues R85 and R91 each contribute to the substrate site. Residues N98 and 121–123 (VSN) contribute to the NAD(+) site. Substrate is bound by residues N123 and R154. H178 (proton acceptor) is an active-site residue.

The protein belongs to the LDH/MDH superfamily. MDH type 3 family.

The enzyme catalyses (S)-malate + NAD(+) = oxaloacetate + NADH + H(+). Functionally, catalyzes the reversible oxidation of malate to oxaloacetate. This chain is Malate dehydrogenase, found in Rhodopirellula baltica (strain DSM 10527 / NCIMB 13988 / SH1).